Consider the following 257-residue polypeptide: Pimeloyl-[acyl-carrier protein] methyl ester esterase (257 aa).

Positions 15-241 (HLVLLHGWGL…KAAHAPFVSH (227 aa)) constitute an AB hydrolase-1 domain. Residues tryptophan 22, 82-83 (SL), and 143-147 (FLALQ) contribute to the substrate site. Serine 82 functions as the Nucleophile in the catalytic mechanism. Active-site residues include aspartate 207 and histidine 235. Histidine 235 lines the substrate pocket.

It belongs to the AB hydrolase superfamily. Carboxylesterase BioH family. In terms of assembly, monomer.

It is found in the cytoplasm. It carries out the reaction 6-carboxyhexanoyl-[ACP] methyl ester + H2O = 6-carboxyhexanoyl-[ACP] + methanol + H(+). It participates in cofactor biosynthesis; biotin biosynthesis. Its function is as follows. The physiological role of BioH is to remove the methyl group introduced by BioC when the pimeloyl moiety is complete. It allows to synthesize pimeloyl-ACP via the fatty acid synthetic pathway through the hydrolysis of the ester bonds of pimeloyl-ACP esters. The polypeptide is Pimeloyl-[acyl-carrier protein] methyl ester esterase (Klebsiella pneumoniae (strain 342)).